The primary structure comprises 290 residues: Diaminopimelate epimerase (290 aa).

Asn-14 and Asn-67 together coordinate substrate. Residue Cys-76 is the Proton donor of the active site. Substrate-binding positions include 77-78, Asn-166, Asn-199, and 217-218; these read GN and ER. The active-site Proton acceptor is Cys-226. 227–228 provides a ligand contact to substrate; sequence GT.

It belongs to the diaminopimelate epimerase family. Homodimer.

It is found in the cytoplasm. The catalysed reaction is (2S,6S)-2,6-diaminopimelate = meso-2,6-diaminopimelate. It participates in amino-acid biosynthesis; L-lysine biosynthesis via DAP pathway; DL-2,6-diaminopimelate from LL-2,6-diaminopimelate: step 1/1. Functionally, catalyzes the stereoinversion of LL-2,6-diaminopimelate (L,L-DAP) to meso-diaminopimelate (meso-DAP), a precursor of L-lysine and an essential component of the bacterial peptidoglycan. This is Diaminopimelate epimerase from Geobacillus kaustophilus (strain HTA426).